The sequence spans 338 residues: Phenylalanine--tRNA ligase alpha subunit (338 aa).

Glutamate 253 is a Mg(2+) binding site.

Belongs to the class-II aminoacyl-tRNA synthetase family. Phe-tRNA synthetase alpha subunit type 1 subfamily. Tetramer of two alpha and two beta subunits. Mg(2+) is required as a cofactor.

It is found in the cytoplasm. It carries out the reaction tRNA(Phe) + L-phenylalanine + ATP = L-phenylalanyl-tRNA(Phe) + AMP + diphosphate + H(+). The chain is Phenylalanine--tRNA ligase alpha subunit from Trichlorobacter lovleyi (strain ATCC BAA-1151 / DSM 17278 / SZ) (Geobacter lovleyi).